Reading from the N-terminus, the 436-residue chain is Phosphomethylpyrimidine synthase (436 aa).

Residues N69, M98, Y127, H163, 185–187, 226–229, and E265 contribute to the substrate site; these read SRG and DACR. A Zn(2+)-binding site is contributed by H269. Y292 lines the substrate pocket. H333 is a Zn(2+) binding site. C409, C412, and C416 together coordinate [4Fe-4S] cluster.

The protein belongs to the ThiC family. It depends on [4Fe-4S] cluster as a cofactor.

It carries out the reaction 5-amino-1-(5-phospho-beta-D-ribosyl)imidazole + S-adenosyl-L-methionine = 4-amino-2-methyl-5-(phosphooxymethyl)pyrimidine + CO + 5'-deoxyadenosine + formate + L-methionine + 3 H(+). It participates in cofactor biosynthesis; thiamine diphosphate biosynthesis. Catalyzes the synthesis of the hydroxymethylpyrimidine phosphate (HMP-P) moiety of thiamine from aminoimidazole ribotide (AIR) in a radical S-adenosyl-L-methionine (SAM)-dependent reaction. In Clostridium perfringens (strain ATCC 13124 / DSM 756 / JCM 1290 / NCIMB 6125 / NCTC 8237 / Type A), this protein is Phosphomethylpyrimidine synthase.